Consider the following 195-residue polypeptide: ATP synthase subunit b (195 aa).

The helical transmembrane segment at 28-48 threads the bilayer; the sequence is IFPNVYVLIAHVISLIFLLLL.

The protein belongs to the ATPase B chain family. F-type ATPases have 2 components, F(1) - the catalytic core - and F(0) - the membrane proton channel. F(1) has five subunits: alpha(3), beta(3), gamma(1), delta(1), epsilon(1). F(0) has three main subunits: a(1), b(2) and c(10-14). The alpha and beta chains form an alternating ring which encloses part of the gamma chain. F(1) is attached to F(0) by a central stalk formed by the gamma and epsilon chains, while a peripheral stalk is formed by the delta and b chains.

The protein resides in the cell membrane. Its function is as follows. F(1)F(0) ATP synthase produces ATP from ADP in the presence of a proton or sodium gradient. F-type ATPases consist of two structural domains, F(1) containing the extramembraneous catalytic core and F(0) containing the membrane proton channel, linked together by a central stalk and a peripheral stalk. During catalysis, ATP synthesis in the catalytic domain of F(1) is coupled via a rotary mechanism of the central stalk subunits to proton translocation. Component of the F(0) channel, it forms part of the peripheral stalk, linking F(1) to F(0). This chain is ATP synthase subunit b, found in Malacoplasma penetrans (strain HF-2) (Mycoplasma penetrans).